The primary structure comprises 302 residues: MNTDTFMCSSDEKQTRSPLSLYSEYQRMEIEFRAPHIMPTSHWHGQVEVNVPFDGDVEYLINNEKVNINQGHITLFWACTPHQLTDTGTCQSMAIFNLPMHLFLSWPLDKDLINHVTHGMVIKSLATQQLSPFEVRRWQQELNSPNEQIRQLAIDEIGLMLKRFSLSGWEPILVNKTSRTHKNSVSRHAQFYVSQMLGFIAENYDQALTINDVAEHVKLNANYAMGIFQRVMQLTMKQYITAMRINHVRALLSDTDKSILDIALTAGFRSSSRFYSTFGKYVGMSPQQYRKLSQQRRQTFPG.

The HTH araC/xylS-type domain maps to 194-292 (SQMLGFIAEN…GMSPQQYRKL (99 aa)). DNA-binding regions (H-T-H motif) lie at residues 211–232 (NDVA…QRVM) and 259–282 (ILDI…GKYV).

Functionally, transcription activator for the expression of the melAB operon. MelR binds at two sites located upstream of the melAB transcription site. In Escherichia coli O6:H1 (strain CFT073 / ATCC 700928 / UPEC), this protein is Melibiose operon regulatory protein (melR).